The following is a 484-amino-acid chain: Aspartyl/glutamyl-tRNA(Asn/Gln) amidotransferase subunit B (484 aa).

The protein belongs to the GatB/GatE family. GatB subfamily. As to quaternary structure, heterotrimer of A, B and C subunits.

It carries out the reaction L-glutamyl-tRNA(Gln) + L-glutamine + ATP + H2O = L-glutaminyl-tRNA(Gln) + L-glutamate + ADP + phosphate + H(+). The catalysed reaction is L-aspartyl-tRNA(Asn) + L-glutamine + ATP + H2O = L-asparaginyl-tRNA(Asn) + L-glutamate + ADP + phosphate + 2 H(+). Allows the formation of correctly charged Asn-tRNA(Asn) or Gln-tRNA(Gln) through the transamidation of misacylated Asp-tRNA(Asn) or Glu-tRNA(Gln) in organisms which lack either or both of asparaginyl-tRNA or glutaminyl-tRNA synthetases. The reaction takes place in the presence of glutamine and ATP through an activated phospho-Asp-tRNA(Asn) or phospho-Glu-tRNA(Gln). The sequence is that of Aspartyl/glutamyl-tRNA(Asn/Gln) amidotransferase subunit B from Bordetella parapertussis (strain 12822 / ATCC BAA-587 / NCTC 13253).